We begin with the raw amino-acid sequence, 134 residues long: MILACDVGLKRIGIAALLNGVILPLEAILRHNRNQASRDLSDLLRKKDIQVLVVGKPNESYADTHARIEHFIKLVDFKGEIVFINEDNSSVEAYENLEHLGKKNKRIATKDGRLDSLSACRILERYCQQVLKKG.

This sequence belongs to the YqgF nuclease family.

Its subcellular location is the cytoplasm. Functionally, could be a nuclease involved in processing of the 5'-end of pre-16S rRNA. The chain is Putative pre-16S rRNA nuclease from Helicobacter pylori (strain J99 / ATCC 700824) (Campylobacter pylori J99).